The chain runs to 347 residues: Cell division protein FtsQ (347 aa).

The disordered stretch occupies residues 1 to 55 (MARNGNPQFPDERSTATRAKATEPEELDDRFSDLEPEEDSPFLRSQKRVPVRRGP). Residues 1-66 (MARNGNPQFP…PSKKAANRVK (66 aa)) are Cytoplasmic-facing. The span at 10-33 (PDERSTATRAKATEPEELDDRFSD) shows a compositional bias: basic and acidic residues. The chain crosses the membrane as a helical span at residues 67 to 87 (IALIVLGVLVVIGGVWMALSA). Residues 88-347 (YGEHSWRFRL…PTAHTSGRRH (260 aa)) lie on the Periplasmic side of the membrane. The POTRA domain maps to 98 to 166 (ESSDSIEVGG…DRIRVQVTER (69 aa)). Residues 308–347 (DSHPSAAKPTAPAVAPAVEKPAVAKPAVAKPTAHTSGRRH) form a disordered region. A compositionally biased stretch (low complexity) spans 313-340 (AAKPTAPAVAPAVEKPAVAKPAVAKPTA).

The protein belongs to the FtsQ/DivIB family. FtsQ subfamily.

The protein resides in the cell inner membrane. Its function is as follows. Essential cell division protein. In Koribacter versatilis (strain Ellin345), this protein is Cell division protein FtsQ.